We begin with the raw amino-acid sequence, 420 residues long: UDP-N-acetylglucosamine 1-carboxyvinyltransferase (420 aa).

22–23 (KN) serves as a coordination point for phosphoenolpyruvate. Residue arginine 93 coordinates UDP-N-acetyl-alpha-D-glucosamine. Cysteine 117 functions as the Proton donor in the catalytic mechanism. Cysteine 117 carries the post-translational modification 2-(S-cysteinyl)pyruvic acid O-phosphothioketal. Residues aspartate 307 and isoleucine 329 each coordinate UDP-N-acetyl-alpha-D-glucosamine.

This sequence belongs to the EPSP synthase family. MurA subfamily.

It is found in the cytoplasm. The enzyme catalyses phosphoenolpyruvate + UDP-N-acetyl-alpha-D-glucosamine = UDP-N-acetyl-3-O-(1-carboxyvinyl)-alpha-D-glucosamine + phosphate. Its pathway is cell wall biogenesis; peptidoglycan biosynthesis. Functionally, cell wall formation. Adds enolpyruvyl to UDP-N-acetylglucosamine. The chain is UDP-N-acetylglucosamine 1-carboxyvinyltransferase from Alteromonas mediterranea (strain DSM 17117 / CIP 110805 / LMG 28347 / Deep ecotype).